Here is a 419-residue protein sequence, read N- to C-terminus: Transcription termination factor Rho (419 aa).

Residues Asp48 to Lys123 enclose the Rho RNA-BD domain. RNA-binding regions lie at residues Gly61–Arg66, Asp78–Tyr80, and Glu108–Tyr110. Residues Gly169–Gly174, Lys181–Met186, and Arg212 each bind ATP. Residues Val284–Gly288 form an RNA-binding 2 region.

Belongs to the Rho family. As to quaternary structure, homohexamer. The homohexamer assembles into an open ring structure.

Its function is as follows. Facilitates transcription termination by a mechanism that involves Rho binding to the nascent RNA, activation of Rho's RNA-dependent ATPase activity, and release of the mRNA from the DNA template. In Escherichia coli O157:H7, this protein is Transcription termination factor Rho.